A 95-amino-acid polypeptide reads, in one-letter code: UPF0358 protein BcerKBAB4_3775 (95 aa).

It belongs to the UPF0358 family.

The protein is UPF0358 protein BcerKBAB4_3775 of Bacillus mycoides (strain KBAB4) (Bacillus weihenstephanensis).